The following is a 36-amino-acid chain: U1-ectatotoxin-Et1b subunit B (36 aa).

A disulfide bridge connects residues Cys-11 and Cys-33.

Belongs to the ectatomin family. Ectatomin-Et subfamily. In terms of assembly, heterodimer of subunits A and B; disulfide-linked. As to expression, expressed by the venom gland.

The protein localises to the secreted. It is found in the target cell membrane. The sequence is that of U1-ectatotoxin-Et1b subunit B from Ectatomma tuberculatum (Selva ant).